The primary structure comprises 380 residues: Glucose-1-phosphate adenylyltransferase (380 aa).

Residues Tyr99, Gly164, 179-180, and Ser190 each bind alpha-D-glucose 1-phosphate; that span reads EK.

The protein belongs to the bacterial/plant glucose-1-phosphate adenylyltransferase family. In terms of assembly, homotetramer.

It carries out the reaction alpha-D-glucose 1-phosphate + ATP + H(+) = ADP-alpha-D-glucose + diphosphate. The protein operates within glycan biosynthesis; glycogen biosynthesis. Involved in the biosynthesis of ADP-glucose, a building block required for the elongation reactions to produce glycogen. Catalyzes the reaction between ATP and alpha-D-glucose 1-phosphate (G1P) to produce pyrophosphate and ADP-Glc. The chain is Glucose-1-phosphate adenylyltransferase from Bacillus subtilis (strain 168).